Here is a 60-residue protein sequence, read N- to C-terminus: MATKTLKVTQTKSSIGRLPKHRATLTGLGLRRINHTVELEDTPAVRGMINKVYYMVKVED.

This sequence belongs to the universal ribosomal protein uL30 family. Part of the 50S ribosomal subunit.

The protein is Large ribosomal subunit protein uL30 of Shewanella loihica (strain ATCC BAA-1088 / PV-4).